A 376-amino-acid polypeptide reads, in one-letter code: Thiol-disulfide oxidoreductase LTO1 (376 aa).

The N-terminal 45 residues, 1–45, are a transit peptide targeting the chloroplast; the sequence is MMARFVSVSSCQFHFGFREVSPPSVTSYPRRFEVSDRRFPAIPIK. The segment at 44-77 is disordered; that stretch reads IKCSSSEPENGEDSAPSLSSSSSSSTSEVSTSNS. Residues 46-81 lie on the Stromal side of the membrane; that stretch reads CSSSEPENGEDSAPSLSSSSSSSTSEVSTSNSSTYN. Residues 57 to 77 show a composition bias toward low complexity; sequence SAPSLSSSSSSSTSEVSTSNS. A helical membrane pass occupies residues 82–102; the sequence is WYTGIGGIGMLDTAYLTYLKV. Residues 103–125 lie on the Lumenal side of the membrane; it reads TGSDAFCPIGGGTCGDVLNSDYA. Cys109 and Cys116 are disulfide-bonded. Residues 126 to 146 traverse the membrane as a helical segment; the sequence is VVFGVPLPVIGFVMYGVVTAL. Over 147–165 the chain is Stromal; the sequence is SAELGEGNLPFGISKSNGR. Residues 166 to 186 traverse the membrane as a helical segment; the sequence is FALFGITTAMASASAYFLYIL. At 187-192 the chain is on the lumenal side; it reads STKLSG. A helical membrane pass occupies residues 193–213; the sequence is SSCLYCLVSAFLSFSLFFLSV. A disulfide bridge connects residues Cys195 and Cys198. Residues 214–223 lie on the Stromal side of the membrane; sequence KDVKLQEIQQ. The chain crosses the membrane as a helical span at residues 224–244; it reads VVGLQICLAIIVVASLTASYS. Residues 245–376 are Lumenal-facing; the sequence is TAQPIPSRSG…DQANETNQLQ (132 aa). 2 disulfides stabilise this stretch: Cys293/Cys296 and Cys316/Cys331.

This sequence belongs to the VKOR family. As to quaternary structure, interacts with the PSII subunits PSBO1 and PSBO2. Interacts with TL17, TL20.3, HCF164, PETJ, VDE1, EDA3, FKBP13 and FKBP20-2. As to expression, expressed in cotyledons, rosette leaves, stems, cauline leaves and flowers.

The protein localises to the plastid. The protein resides in the chloroplast thylakoid membrane. Thiol-disulfide oxidoreductase catalyzing disulfide bond formation of chloroplast proteins and involved in redox regulation and photosynthetic electron transport. Required for the assembly of photosystem II (PSII) through the formation of disulfide bond in PSBO, a subunit of the PSII oxygen-evolving complex in the thylakoid lumen. Involved in the formation of disulfide bonds in the lumenal protein FKBP13. In vitro, reduces phylloquinone (vitamin K1) and menaquinone (vitamin K2) to their respective quinol. Cannot reduce phylloquinone epoxide to phylloquinone. Plays an important role in regulating the thylakoid lumen redox. This chain is Thiol-disulfide oxidoreductase LTO1, found in Arabidopsis thaliana (Mouse-ear cress).